The following is a 241-amino-acid chain: Caffeoyl-CoA O-methyltransferase (241 aa).

M1 bears the Blocked amino end (Met) mark. K15 contacts substrate. Residues T57, E79, 81–82, S87, D105, and A134 each bind S-adenosyl-L-methionine; that span reads GV. Residue D157 coordinates substrate. D157 is an a divalent metal cation binding site. D159 is an S-adenosyl-L-methionine binding site. 2 residues coordinate a divalent metal cation: D183 and N184. Residue N188 participates in substrate binding.

It belongs to the class I-like SAM-binding methyltransferase superfamily. Cation-dependent O-methyltransferase family. CCoAMT subfamily. As to quaternary structure, homodimer. Requires a divalent metal cation as cofactor. As to expression, roots and leaves.

It catalyses the reaction (E)-caffeoyl-CoA + S-adenosyl-L-methionine = (E)-feruloyl-CoA + S-adenosyl-L-homocysteine + H(+). The protein operates within aromatic compound metabolism; phenylpropanoid biosynthesis. Methylates caffeoyl-CoA to feruloyl-CoA and 5-hydroxyferuloyl-CoA to sinapoyl-CoA. Plays a role in the synthesis of feruloylated polysaccharides. Involved in the reinforcement of the plant cell wall. Also involved in the responding to wounding or pathogen challenge by the increased formation of cell wall-bound ferulic acid polymers. The protein is Caffeoyl-CoA O-methyltransferase of Petroselinum crispum (Parsley).